The following is a 613-amino-acid chain: Probable potassium transport system protein Kup (613 aa).

A run of 11 helical transmembrane segments spans residues 38-58 (VLGV…LKYL), 91-111 (WILV…GMIT), 128-148 (PSFG…LFLF), 159-179 (FFGP…LVEI), 206-226 (FLVL…YADM), 238-258 (WSLL…AVLL), 270-290 (ALVP…ATII), 328-348 (IYVP…VAGF), 357-377 (AYGV…YYVA), 387-407 (GLNL…GASV), and 410-430 (LFHG…LMLT).

It belongs to the HAK/KUP transporter (TC 2.A.72) family.

It is found in the cell inner membrane. It catalyses the reaction K(+)(in) + H(+)(in) = K(+)(out) + H(+)(out). In terms of biological role, transport of potassium into the cell. Likely operates as a K(+):H(+) symporter. The sequence is that of Probable potassium transport system protein Kup from Chlorobaculum tepidum (strain ATCC 49652 / DSM 12025 / NBRC 103806 / TLS) (Chlorobium tepidum).